Consider the following 236-residue polypeptide: Endonuclease V (236 aa).

Asp-47 and Asp-115 together coordinate Mg(2+).

Belongs to the endonuclease V family. It depends on Mg(2+) as a cofactor.

The protein localises to the cytoplasm. The catalysed reaction is Endonucleolytic cleavage at apurinic or apyrimidinic sites to products with a 5'-phosphate.. Functionally, DNA repair enzyme involved in the repair of deaminated bases. Selectively cleaves double-stranded DNA at the second phosphodiester bond 3' to a deoxyinosine leaving behind the intact lesion on the nicked DNA. In Xanthomonas campestris pv. campestris (strain B100), this protein is Endonuclease V.